The primary structure comprises 224 residues: Transcription cofactor HES-6 (224 aa).

A disordered region spans residues 1–31 (MAPPAAPGRDRVGREDEDGWETRGDRKARKP). Residues 8–25 (GRDRVGREDEDGWETRGD) are compositionally biased toward basic and acidic residues. The region spanning 25-77 (DRKARKPLVEKKRRARINESLQELRLLLAGAEVQAKLENAEVLELTVRRVQGV) is the bHLH domain. Residues 96-129 (FAAGYIQCMHEVHTFVSTCQAIDATVAAELLNHL) enclose the Orange domain. Residues 147–161 (DALAGPPRAPGRSGW) show a composition bias toward low complexity. Positions 147 to 205 (DALAGPPRAPGRSGWPAGGAPGSPIPSPPGPGDDLCSDLEEAPEAELSQAPAEGPDLVP) are disordered. The segment covering 181–190 (LCSDLEEAPE) has biased composition (acidic residues). The WRPW motif signature appears at 221-224 (WRPW).

In terms of assembly, transcription repression requires formation of a complex with a corepressor protein of the Groucho/TLE family. Interacts with HES1.

The protein resides in the nucleus. Its function is as follows. Does not bind DNA itself but suppresses both HES1-mediated N box-dependent transcriptional repression and binding of HES1 to E box sequences. Also suppresses HES1-mediated inhibition of the heterodimer formed by ASCL1/MASH1 and TCF3/E47, allowing ASCL1 and TCF3 to up-regulate transcription in its presence. Promotes cell differentiation. The protein is Transcription cofactor HES-6 of Homo sapiens (Human).